Here is a 175-residue protein sequence, read N- to C-terminus: Large ribosomal subunit protein uL10 (175 aa).

This sequence belongs to the universal ribosomal protein uL10 family. Part of the ribosomal stalk of the 50S ribosomal subunit. The N-terminus interacts with L11 and the large rRNA to form the base of the stalk. The C-terminus forms an elongated spine to which L12 dimers bind in a sequential fashion forming a multimeric L10(L12)X complex.

Its function is as follows. Forms part of the ribosomal stalk, playing a central role in the interaction of the ribosome with GTP-bound translation factors. The chain is Large ribosomal subunit protein uL10 from Delftia acidovorans (strain DSM 14801 / SPH-1).